We begin with the raw amino-acid sequence, 489 residues long: COX3 mRNA-specific translational activator PET494 (489 aa).

Its subcellular location is the mitochondrion inner membrane. Functionally, required for the expression of the mitochondrial gene for cytochrome c oxidase subunit III (COX3). The sequence is that of COX3 mRNA-specific translational activator PET494 (PET494) from Saccharomyces bayanus (Yeast).